Reading from the N-terminus, the 174-residue chain is Large ribosomal subunit protein bL17 (174 aa).

The protein belongs to the bacterial ribosomal protein bL17 family. As to quaternary structure, part of the 50S ribosomal subunit. Contacts protein L32.

In Ruminiclostridium cellulolyticum (strain ATCC 35319 / DSM 5812 / JCM 6584 / H10) (Clostridium cellulolyticum), this protein is Large ribosomal subunit protein bL17.